A 612-amino-acid polypeptide reads, in one-letter code: uncharacterized protein (612 aa).

The protein resides in the plastid. It localises to the chloroplast. This is an uncharacterized protein from Pyropia yezoensis (Susabi-nori).